The following is a 65-amino-acid chain: Chymotrypsin/elastase isoinhibitors 2 to 5 (65 aa).

5 cysteine pairs are disulfide-bonded: C4/C37, C13/C32, C16/C28, C20/C59, and C39/C53. One can recognise a TIL domain in the interval C4–C59.

It belongs to the serine protease inhibitor-like (TIL domain-containing) family.

It is found in the secreted. Its function is as follows. Defends the organism against the host's proteinases. This chain is Chymotrypsin/elastase isoinhibitors 2 to 5, found in Ascaris suum (Pig roundworm).